A 151-amino-acid chain; its full sequence is RNA polymerase-binding transcription factor DksA (151 aa).

A coiled-coil region spans residues 34-54; it reads EAQLSHFKRILEAWRNQLRDE. Zn(2+) is bound by residues Cys114, Cys117, Cys135, and Cys138. A dksA C4-type zinc finger spans residues 114 to 138; that stretch reads CESCGVEIGIRRLEARPTADLCIDC.

This sequence belongs to the DksA family. In terms of assembly, interacts directly with the RNA polymerase.

It localises to the cytoplasm. Transcription factor that acts by binding directly to the RNA polymerase (RNAP). Required for negative regulation of rRNA expression and positive regulation of several amino acid biosynthesis promoters. Also required for regulation of fis expression. This is RNA polymerase-binding transcription factor DksA from Salmonella typhi.